Here is a 185-residue protein sequence, read N- to C-terminus: Peptide deformylase (185 aa).

Residues C112 and H155 each coordinate Fe cation. Residue E156 is part of the active site. H159 contacts Fe cation.

It belongs to the polypeptide deformylase family. It depends on Fe(2+) as a cofactor.

The enzyme catalyses N-terminal N-formyl-L-methionyl-[peptide] + H2O = N-terminal L-methionyl-[peptide] + formate. Its function is as follows. Removes the formyl group from the N-terminal Met of newly synthesized proteins. Requires at least a dipeptide for an efficient rate of reaction. N-terminal L-methionine is a prerequisite for activity but the enzyme has broad specificity at other positions. The protein is Peptide deformylase of Latilactobacillus sakei subsp. sakei (strain 23K) (Lactobacillus sakei subsp. sakei).